The sequence spans 166 residues: Large ribosomal subunit protein mL41 (166 aa).

A mitochondrion-targeting transit peptide spans Met1 to Asp26.

Belongs to the mitochondrion-specific ribosomal protein mL41 family. Component of the mitochondrial ribosome large subunit (39S) which comprises a 16S rRNA and about 50 distinct proteins.

It localises to the mitochondrion. The sequence is that of Large ribosomal subunit protein mL41 (mRpL41) from Drosophila pseudoobscura pseudoobscura (Fruit fly).